A 159-amino-acid chain; its full sequence is Peripheral myelin protein 22 (159 aa).

Met-1 is a topological domain (cytoplasmic). Residues 2–31 (LLLLLGIIVLHVAVLVLLFVATIVSQWIVG) traverse the membrane as a helical segment. Residues 32–64 (NGHATDLWQNCSTTSGNVQHCLSSSANEWLQSV) lie on the Extracellular side of the membrane. Asn-41 carries N-linked (GlcNAc...) asparagine glycosylation. A helical membrane pass occupies residues 65 to 91 (QATMILSIIFSVLSLFLFFCQLFTLTK). At 92–95 (GGRF) the chain is on the cytoplasmic side. The chain crosses the membrane as a helical span at residues 96-119 (YITGIFQILAGLCVMSAASIYTVR). The Extracellular segment spans residues 120 to 133 (HPEWHLDSAYSYGF). A helical transmembrane segment spans residues 134-156 (AYILAWVAFPLALLSGVVYVILR). Topologically, residues 157-159 (KRE) are cytoplasmic.

It belongs to the PMP-22/EMP/MP20 family. Post-translationally, ubiquitinated by the DCX(DCAF13) E3 ubiquitin ligase complex, leading to its degradation.

Its subcellular location is the cell membrane. Might be involved in growth regulation, and in myelinization in the peripheral nervous system. The protein is Peripheral myelin protein 22 (PMP22) of Equus caballus (Horse).